A 131-amino-acid chain; its full sequence is Small ribosomal subunit protein uS8 (131 aa).

Belongs to the universal ribosomal protein uS8 family. Part of the 30S ribosomal subunit. Contacts proteins S5 and S12.

Functionally, one of the primary rRNA binding proteins, it binds directly to 16S rRNA central domain where it helps coordinate assembly of the platform of the 30S subunit. The sequence is that of Small ribosomal subunit protein uS8 from Legionella pneumophila subsp. pneumophila (strain Philadelphia 1 / ATCC 33152 / DSM 7513).